The primary structure comprises 676 residues: DNA ligase (676 aa).

NAD(+)-binding positions include 32 to 36 (DAEYD), 81 to 82 (SL), and E113. Residue K115 is the N6-AMP-lysine intermediate of the active site. The NAD(+) site is built by R136, E173, K291, and K315. Zn(2+)-binding residues include C409, C412, C427, and C433. The BRCT domain occupies 595–676 (SEKTYFFNKK…LNSLIRIKEQ (82 aa)).

The protein belongs to the NAD-dependent DNA ligase family. LigA subfamily. It depends on Mg(2+) as a cofactor. The cofactor is Mn(2+).

It carries out the reaction NAD(+) + (deoxyribonucleotide)n-3'-hydroxyl + 5'-phospho-(deoxyribonucleotide)m = (deoxyribonucleotide)n+m + AMP + beta-nicotinamide D-nucleotide.. DNA ligase that catalyzes the formation of phosphodiester linkages between 5'-phosphoryl and 3'-hydroxyl groups in double-stranded DNA using NAD as a coenzyme and as the energy source for the reaction. It is essential for DNA replication and repair of damaged DNA. This is DNA ligase from Buchnera aphidicola subsp. Acyrthosiphon pisum (strain Tuc7).